Consider the following 372-residue polypeptide: Aminomethyltransferase (372 aa).

Belongs to the GcvT family. As to quaternary structure, the glycine cleavage system is composed of four proteins: P, T, L and H.

The enzyme catalyses N(6)-[(R)-S(8)-aminomethyldihydrolipoyl]-L-lysyl-[protein] + (6S)-5,6,7,8-tetrahydrofolate = N(6)-[(R)-dihydrolipoyl]-L-lysyl-[protein] + (6R)-5,10-methylene-5,6,7,8-tetrahydrofolate + NH4(+). Its function is as follows. The glycine cleavage system catalyzes the degradation of glycine. The chain is Aminomethyltransferase from Burkholderia cenocepacia (strain ATCC BAA-245 / DSM 16553 / LMG 16656 / NCTC 13227 / J2315 / CF5610) (Burkholderia cepacia (strain J2315)).